A 152-amino-acid polypeptide reads, in one-letter code: Superoxide dismutase [Cu-Zn] (152 aa).

Positions 45, 47, and 62 each coordinate Cu cation. Cysteines 56 and 145 form a disulfide. 4 residues coordinate Zn(2+): H62, H70, H79, and D82. A Cu cation-binding site is contributed by H119.

This sequence belongs to the Cu-Zn superoxide dismutase family. As to quaternary structure, homodimer. Requires Cu cation as cofactor. The cofactor is Zn(2+).

It localises to the cytoplasm. The catalysed reaction is 2 superoxide + 2 H(+) = H2O2 + O2. In terms of biological role, destroys radicals which are normally produced within the cells and which are toxic to biological systems. This Panax ginseng (Korean ginseng) protein is Superoxide dismutase [Cu-Zn] (SODCC).